A 172-amino-acid polypeptide reads, in one-letter code: MPGIVELPTLEELKVDEVKISSAVLKAAAHHYGAQCDKPNKEFMLCRWEEKDPRRCLEEGKLVNKCALDFFRQIKRHCAEPFTEYWTCIDYTGQQLFRHCRKQQAKFDECVLDKLGWVRPDLGELSKVTKVKTDRPLPENPYHSRPRPDPSPEIEGDLQPATHGSRFYFWTK.

2 CHCH domains span residues 33–74 (GAQC…FRQI) and 75–118 (KRHC…LGWV). Short sequence motifs (cx9C motif) lie at residues 36 to 46 (CDKPNKEFMLC), 56 to 66 (CLEEGKLVNKC), 78 to 88 (CAEPFTEYWTC), and 100 to 110 (CRKQQAKFDEC). Intrachain disulfides connect cysteine 36/cysteine 66, cysteine 46/cysteine 56, cysteine 78/cysteine 110, and cysteine 88/cysteine 100. The segment at 133–164 (TDRPLPENPYHSRPRPDPSPEIEGDLQPATHG) is disordered.

The protein belongs to the complex I NDUFA8 subunit family. As to quaternary structure, complex I is composed of 45 different subunits. In terms of processing, may contain intrachain disulfide bonds, as evidenced by its electrophoretic mobility under reducing vs non-reducing conditions.

The protein localises to the mitochondrion inner membrane. It is found in the mitochondrion intermembrane space. It localises to the mitochondrion. In terms of biological role, accessory subunit of the mitochondrial membrane respiratory chain NADH dehydrogenase (Complex I), that is believed not to be involved in catalysis. Complex I functions in the transfer of electrons from NADH to the respiratory chain. The immediate electron acceptor for the enzyme is believed to be ubiquinone. This chain is NADH dehydrogenase [ubiquinone] 1 alpha subcomplex subunit 8 (NDUFA8), found in Homo sapiens (Human).